A 422-amino-acid chain; its full sequence is Histidine--tRNA ligase (422 aa).

It belongs to the class-II aminoacyl-tRNA synthetase family. In terms of assembly, homodimer.

It is found in the cytoplasm. The catalysed reaction is tRNA(His) + L-histidine + ATP = L-histidyl-tRNA(His) + AMP + diphosphate + H(+). This Alcanivorax borkumensis (strain ATCC 700651 / DSM 11573 / NCIMB 13689 / SK2) protein is Histidine--tRNA ligase.